We begin with the raw amino-acid sequence, 507 residues long: MDKLQYELQGYLEIDRYRKQRFLYPLLFREYIYALAHDHGLNSSIFYEPTENLGYDNDNKSSSLIVKRLITRLHQQNHLTISVNDSRFVGPNRSFYSQTIPEGFAGIMEIPFSVRLVCSLERERIAKYQNLRSIHSIFPFLEDKLSHLYYVSDILIPYPIHLEILLQTLRTRIRDAPSLHLLRCFLHEHHNWNSLITSNKSISIFSKENQRLFLFLYNSHVYECESVLVFLRKQSSYLRSISSLAFLERTHFYGKIKHLVVTPRNDSQRTLPLWFFKEPLMHYVRYQGKSIMASRCTNLLMXKWKYYLVNFWQCHFHLWSQPGRIHINELSNHSFYFLGYLSGVRLTPWVIRSQMLENSFMIDTAIKRFDTIVPIFPLIGSLVKAKFCNVSGYPISKSVWADSSDSDIIGRFGWICRNLSHYHSGSSKKHSLCRIKYILRLSCARTLARKHKSTVRAICKRLGPKLLEEFLTEEHEIVSFILRRTRLRNERIWYLDIIRINGLVPHS.

The protein belongs to the intron maturase 2 family. MatK subfamily.

The protein resides in the plastid. It localises to the chloroplast. Functionally, usually encoded in the trnK tRNA gene intron. Probably assists in splicing its own and other chloroplast group II introns. This chain is Maturase K, found in Euryale ferox (Gorgon plant).